The primary structure comprises 274 residues: Penicillin-insensitive murein endopeptidase (274 aa).

An N-terminal signal peptide occupies residues Met1–Ala19. 3 disulfides stabilise this stretch: Cys44/Cys265, Cys187/Cys235, and Cys216/Cys223. The Zn(2+) site is built by His110, His113, Asp120, Asp147, His150, and His211. The tract at residues Leu228–Ser264 is disordered.

It belongs to the peptidase M74 family. Dimer. The cofactor is Zn(2+).

It is found in the periplasm. Its function is as follows. Murein endopeptidase that cleaves the D-alanyl-meso-2,6-diamino-pimelyl amide bond that connects peptidoglycan strands. Likely plays a role in the removal of murein from the sacculus. In Escherichia coli (strain 55989 / EAEC), this protein is Penicillin-insensitive murein endopeptidase.